The chain runs to 152 residues: Transcriptional regulator MraZ (152 aa).

2 consecutive SpoVT-AbrB domains span residues 5-52 (ATLV…TLPE) and 81-124 (ASEC…DEQV).

The protein belongs to the MraZ family. As to quaternary structure, forms oligomers.

It is found in the cytoplasm. The protein resides in the nucleoid. Negatively regulates its own expression and that of the subsequent genes in the proximal part of the division and cell wall (dcw) gene cluster. Acts by binding directly to DNA. May also regulate the expression of genes outside the dcw cluster. This is Transcriptional regulator MraZ from Proteus mirabilis (strain HI4320).